Reading from the N-terminus, the 116-residue chain is NADH-ubiquinone oxidoreductase chain 3 (116 aa).

The next 3 helical transmembrane spans lie at 3–23 (LITTIITITITLSAVLATISF), 56–76 (FFLIAILFLLFDLEIALLLPL), and 87–107 (LTLIWSTAVLALLTLGLIYEW).

This sequence belongs to the complex I subunit 3 family.

It localises to the mitochondrion membrane. The enzyme catalyses a ubiquinone + NADH + 5 H(+)(in) = a ubiquinol + NAD(+) + 4 H(+)(out). Core subunit of the mitochondrial membrane respiratory chain NADH dehydrogenase (Complex I) that is believed to belong to the minimal assembly required for catalysis. Complex I functions in the transfer of electrons from NADH to the respiratory chain. The immediate electron acceptor for the enzyme is believed to be ubiquinone. This is NADH-ubiquinone oxidoreductase chain 3 (MT-ND3) from Oncorhynchus gorbuscha (Pink salmon).